The chain runs to 511 residues: Bifunctional purine biosynthesis protein PurH (511 aa).

In terms of domain architecture, MGS-like spans 1 to 145 (MKKRALVSVS…KNHKFVSVIV (145 aa)).

This sequence belongs to the PurH family.

It carries out the reaction (6R)-10-formyltetrahydrofolate + 5-amino-1-(5-phospho-beta-D-ribosyl)imidazole-4-carboxamide = 5-formamido-1-(5-phospho-D-ribosyl)imidazole-4-carboxamide + (6S)-5,6,7,8-tetrahydrofolate. It catalyses the reaction IMP + H2O = 5-formamido-1-(5-phospho-D-ribosyl)imidazole-4-carboxamide. The protein operates within purine metabolism; IMP biosynthesis via de novo pathway; 5-formamido-1-(5-phospho-D-ribosyl)imidazole-4-carboxamide from 5-amino-1-(5-phospho-D-ribosyl)imidazole-4-carboxamide (10-formyl THF route): step 1/1. It participates in purine metabolism; IMP biosynthesis via de novo pathway; IMP from 5-formamido-1-(5-phospho-D-ribosyl)imidazole-4-carboxamide: step 1/1. This Bacillus cereus (strain B4264) protein is Bifunctional purine biosynthesis protein PurH.